The primary structure comprises 88 residues: UPF0297 protein STER_1937 (88 aa).

The protein belongs to the UPF0297 family.

The protein is UPF0297 protein STER_1937 of Streptococcus thermophilus (strain ATCC BAA-491 / LMD-9).